The following is a 331-amino-acid chain: Cytosolic arginine sensor for mTORC1 subunit 1 (331 aa).

Serine 14 is modified (phosphoserine). An ACT 1 domain is found at 72–139 (AEATWLVMNV…SVVIHTLARE (68 aa)). 110–111 (SV) provides a ligand contact to L-arginine. The disordered stretch occupies residues 155 to 174 (GDDSSNGFPQAQHGPSPTVH). The span at 156 to 174 (DDSSNGFPQAQHGPSPTVH) shows a compositional bias: polar residues. Residues 262–322 (WRMVRIGGQP…SCVIDILQRR (61 aa)) enclose the ACT 2 domain. Residues glycine 273, 279 to 280 (IV), and 299 to 303 (TFNFD) contribute to the L-arginine site.

It belongs to the GATS family. Forms homodimers and heterodimers with CASTOR2. Interacts with the GATOR2 complex which is composed of MIOS, SEC13, SEH1L, WDR24 and WDR59; the interaction is negatively regulated by arginine. Interacts with TM4SF5; the interaction is positively regulated by leucine and is negatively regulated by arginine. Post-translationally, phosphorylation at Ser-14 by AKT1, promoting the interaction between CASTOR1 and RNF167. Ubiquitinated by RNF167 via 'Lys-29'-polyubiquitination, leading to its degradation, releasing the GATOR2 complex. Ubiquitination by RNF167 is promoted by phosphorylation at Ser-14 by AKT1.

It localises to the cytoplasm. The protein resides in the cytosol. Its function is as follows. Functions as an intracellular arginine sensor within the amino acid-sensing branch of the TORC1 signaling pathway. As a homodimer or a heterodimer with CASTOR2, binds and inhibits the GATOR subcomplex GATOR2 and thereby mTORC1. Binding of arginine to CASTOR1 allosterically disrupts the interaction of CASTOR1-containing dimers with GATOR2 which can in turn activate mTORC1 and the TORC1 signaling pathway. The chain is Cytosolic arginine sensor for mTORC1 subunit 1 from Rattus norvegicus (Rat).